A 911-amino-acid polypeptide reads, in one-letter code: Chromatin assembly factor 1 subunit A (911 aa).

The binds PCNA stretch occupies residues 1–31; the sequence is MLEEPEAATRTAAAVDCKDRPGFPVKRLIQA. Positions 166–200 are disordered; it reads HMEEEPGSPGDPKRTGDCQAGSLQSCPELTPGSRT. The interval 176–327 is binds CBX1 and CBX3 chromo shadow domains; that stretch reads DPKRTGDCQA…LHRDREQQRE (152 aa). The segment covering 186–200 has biased composition (polar residues); that stretch reads GSLQSCPELTPGSRT. 2 positions are modified to phosphoserine: S190 and S208. The short motif at 217–230 is the PxVxL motif element; the sequence is FIEKVPVVVLEDIL. Disordered regions lie at residues 250–408 and 578–618; these read SESE…EEEK and DSDD…VPHG. Positions 265-281 are enriched in low complexity; the sequence is LSHSSTNSSSPTSSPEG. S293 is subject to Phosphoserine. Over residues 310–408 the composition is skewed to basic and acidic residues; that stretch reads STEKGRSKLH…EEKRLREEEK (99 aa). Acidic residues-rich tracts occupy residues 578 to 589 and 597 to 612; these read DSDDEWEEEEPG and GDED…EDDG. Positions 621 to 657 are necessary for homodimerization and competence for chromatin assembly; the sequence is SEDEGVTEECADPENHKVHQKLKAKEWDELLAKGKRF. The binds to p60 stretch occupies residues 639–911; the sequence is HQKLKAKEWD…APIPAPTLCK (273 aa). Phosphoserine is present on S776. Disordered regions lie at residues 819-843 and 866-886; these read PSAP…MLLK and GSGD…DDTD. The span at 827–839 shows a compositional bias: polar residues; the sequence is GSASTEGPGQSTP. The residue at position 838 (T838) is a Phosphothreonine. Acidic residues predominate over residues 876 to 886; the sequence is DTEEDEEDDTD.

The protein belongs to the CHAF1A family. In terms of assembly, homodimer. Part of the CAF-1 complex that contains RBBP4, CHAF1B and CHAF1A. CHAF1A binds directly to CHAF1B. Only minor amounts of RBBP4 are complexed with CHAF1A and CHAF1B in G1 phase. Interacts with PCNA; the interaction is direct. Interacts (via the PxVxL motif) with CBX5; the interaction is direct. Interacts with MBD1. Interacts with histones H3.1, H3.2 and H3.1t.

The protein resides in the nucleus. Acts as a component of the histone chaperone complex chromatin assembly factor 1 (CAF-1), which assembles histone octamers onto DNA during replication and repair. CAF-1 performs the first step of the nucleosome assembly process, bringing newly synthesized histones H3 and H4 to replicating DNA; histones H2A/H2B can bind to this chromatin precursor subsequent to DNA replication to complete the histone octamer. It may play a role in heterochromatin maintenance in proliferating cells by bringing newly synthesized cbx proteins to heterochromatic DNA replication foci. The sequence is that of Chromatin assembly factor 1 subunit A from Mus musculus (Mouse).